Consider the following 536-residue polypeptide: Lysosomal acid glucosylceramidase (536 aa).

A signal peptide spans 1–39; the sequence is MELSSPSREECPRPQGRVGIMAASLMGLLLLQAASWASG. Intrachain disulfides connect Cys-43–Cys-55 and Cys-57–Cys-62. 3 N-linked (GlcNAc...) asparagine glycosylation sites follow: Asn-58, Asn-98, and Asn-185. The active-site Proton donor is Glu-274. Asn-309 carries an N-linked (GlcNAc...) asparagine glycan. Glu-379 functions as the Nucleophile in the catalytic mechanism. A glycan (N-linked (GlcNAc...) asparagine) is linked at Asn-501.

The protein belongs to the glycosyl hydrolase 30 family. As to quaternary structure, interacts with saposin-C. Interacts with SCARB2. Interacts with TCP1. Interacts with GRN; this interaction prevents aggregation of GBA1-SCARB2 complex via interaction with HSPA1A upon stress.

The protein resides in the lysosome membrane. The enzyme catalyses a beta-D-glucosyl-(1&lt;-&gt;1')-N-acylsphing-4-enine + H2O = an N-acylsphing-4-enine + D-glucose. The catalysed reaction is a beta-D-galactosyl-(1&lt;-&gt;1')-N-acylsphing-4-enine + H2O = an N-acylsphing-4-enine + D-galactose. It carries out the reaction cholesteryl 3-beta-D-glucoside + H2O = cholesterol + D-glucose. It catalyses the reaction a beta-D-glucosyl-(1&lt;-&gt;1')-N-acylsphing-4-enine + cholesterol = cholesteryl 3-beta-D-glucoside + an N-acylsphing-4-enine. The enzyme catalyses beta-D-glucosyl-N-(9Z-octadecenoyl)-sphing-4E-enine + cholesterol = N-(9Z-octadecenoyl)-sphing-4-enine + cholesteryl 3-beta-D-glucoside. The catalysed reaction is beta-D-glucosyl-N-octanoylsphing-4E-enine + cholesterol = N-octanoylsphing-4-enine + cholesteryl 3-beta-D-glucoside. It carries out the reaction beta-D-glucosyl-N-dodecanoylsphing-4-enine + cholesterol = N-dodecanoylsphing-4-enine + cholesteryl 3-beta-D-glucoside. It catalyses the reaction beta-D-glucosyl-(1&lt;-&gt;1)-N-octadecanoylsphing-4-enine + cholesterol = N-octadecanoylsphing-4-enine + cholesteryl 3-beta-D-glucoside. The enzyme catalyses beta-D-glucosyl-(1&lt;-&gt;1')-N-(15Z-tetracosenoyl)-sphing-4-enine + cholesterol = N-(15Z-tetracosenoyl)-sphing-4-enine + cholesteryl 3-beta-D-glucoside. The catalysed reaction is a beta-D-galactosyl-(1&lt;-&gt;1')-N-acylsphing-4-enine + cholesterol = cholesteryl 3-beta-D-galactoside + an N-acylsphing-4-enine. It carries out the reaction 1-(beta-D-galactosyl)-N-dodecanoylsphing-4-enine + cholesterol = cholesteryl 3-beta-D-galactoside + N-dodecanoylsphing-4-enine. It catalyses the reaction a beta-D-xylosyl-(1&lt;-&gt;1')-N-acylsphing-4-enine + cholesterol = cholesteryl 3-beta-D-xyloside + an N-acylsphing-4-enine. The enzyme catalyses beta-D-xylosyl-(1&lt;-&gt;1')-N-(9Z-octadecenoyl)-sphing-4-enine + cholesterol = cholesteryl 3-beta-D-xyloside + N-(9Z-octadecenoyl)-sphing-4-enine. It participates in steroid metabolism; cholesterol metabolism. It functions in the pathway sphingolipid metabolism. Glucosylceramidase that catalyzes, within the lysosomal compartment, the hydrolysis of glucosylceramides/GlcCers (such as beta-D-glucosyl-(1&lt;-&gt;1')-N-acylsphing-4-enine) into free ceramides (such as N-acylsphing-4-enine) and glucose. Plays a central role in the degradation of complex lipids and the turnover of cellular membranes. Through the production of ceramides, participates in the PKC-activated salvage pathway of ceramide formation. Catalyzes the glucosylation of cholesterol, through a transglucosylation reaction where glucose is transferred from GlcCer to cholesterol. GlcCer containing mono-unsaturated fatty acids (such as beta-D-glucosyl-N-(9Z-octadecenoyl)-sphing-4-enine) are preferred as glucose donors for cholesterol glucosylation when compared with GlcCer containing same chain length of saturated fatty acids (such as beta-D-glucosyl-N-octadecanoyl-sphing-4-enine). Under specific conditions, may alternatively catalyze the reverse reaction, transferring glucose from cholesteryl 3-beta-D-glucoside to ceramide. Can also hydrolyze cholesteryl 3-beta-D-glucoside producing glucose and cholesterol. Catalyzes the hydrolysis of galactosylceramides/GalCers (such as beta-D-galactosyl-(1&lt;-&gt;1')-N-acylsphing-4-enine), as well as the transfer of galactose between GalCers and cholesterol in vitro, but with lower activity than with GlcCers. Contrary to GlcCer and GalCer, xylosylceramide/XylCer (such as beta-D-xyosyl-(1&lt;-&gt;1')-N-acylsphing-4-enine) is not a good substrate for hydrolysis, however it is a good xylose donor for transxylosylation activity to form cholesteryl 3-beta-D-xyloside. This Sus scrofa (Pig) protein is Lysosomal acid glucosylceramidase (GBA1).